A 90-amino-acid polypeptide reads, in one-letter code: Large ribosomal subunit protein bL27 (90 aa).

The interval 1-20 (MAHKKAGGSSRNGRDSAGKR) is disordered.

It belongs to the bacterial ribosomal protein bL27 family.

The protein is Large ribosomal subunit protein bL27 of Rhodopseudomonas palustris (strain BisB18).